The primary structure comprises 302 residues: tRNA dimethylallyltransferase (302 aa).

7-14 (GPTASGKS) contacts ATP. 9-14 (TASGKS) contacts substrate. Interaction with substrate tRNA regions lie at residues 32–35 (DSMQ) and 156–160 (QRILR).

The protein belongs to the IPP transferase family. As to quaternary structure, monomer. Requires Mg(2+) as cofactor.

The catalysed reaction is adenosine(37) in tRNA + dimethylallyl diphosphate = N(6)-dimethylallyladenosine(37) in tRNA + diphosphate. Catalyzes the transfer of a dimethylallyl group onto the adenine at position 37 in tRNAs that read codons beginning with uridine, leading to the formation of N6-(dimethylallyl)adenosine (i(6)A). The protein is tRNA dimethylallyltransferase of Beijerinckia indica subsp. indica (strain ATCC 9039 / DSM 1715 / NCIMB 8712).